Reading from the N-terminus, the 110-residue chain is Large ribosomal subunit protein uL22 (110 aa).

Belongs to the universal ribosomal protein uL22 family. As to quaternary structure, part of the 50S ribosomal subunit.

Its function is as follows. This protein binds specifically to 23S rRNA; its binding is stimulated by other ribosomal proteins, e.g. L4, L17, and L20. It is important during the early stages of 50S assembly. It makes multiple contacts with different domains of the 23S rRNA in the assembled 50S subunit and ribosome. Functionally, the globular domain of the protein is located near the polypeptide exit tunnel on the outside of the subunit, while an extended beta-hairpin is found that lines the wall of the exit tunnel in the center of the 70S ribosome. This Enterobacter sp. (strain 638) protein is Large ribosomal subunit protein uL22.